A 188-amino-acid polypeptide reads, in one-letter code: Ribose 1,5-bisphosphate phosphokinase PhnN (188 aa).

This sequence belongs to the ribose 1,5-bisphosphokinase family.

It catalyses the reaction alpha-D-ribose 1,5-bisphosphate + ATP = 5-phospho-alpha-D-ribose 1-diphosphate + ADP. It functions in the pathway metabolic intermediate biosynthesis; 5-phospho-alpha-D-ribose 1-diphosphate biosynthesis; 5-phospho-alpha-D-ribose 1-diphosphate from D-ribose 5-phosphate (route II): step 3/3. In terms of biological role, catalyzes the phosphorylation of ribose 1,5-bisphosphate to 5-phospho-D-ribosyl alpha-1-diphosphate (PRPP). In Dickeya zeae (strain Ech586) (Dickeya dadantii (strain Ech586)), this protein is Ribose 1,5-bisphosphate phosphokinase PhnN.